A 642-amino-acid chain; its full sequence is Poly(A) polymerase beta (642 aa).

ATP is bound by residues 101-103 (FGS), Thr-110, 114-116 (DID), Asp-168, Lys-229, Tyr-238, and 247-248 (GV). Mg(2+) contacts are provided by Asp-114, Asp-116, and Asp-168. 2 disordered regions span residues 530-553 (SENS…GNPQ) and 620-642 (LVNH…ILGV). Positions 620 to 636 (LVNHPSRPSGNTATNIP) are enriched in polar residues.

It belongs to the poly(A) polymerase family. As to quaternary structure, interacts with GSG1. It depends on Mg(2+) as a cofactor. Mn(2+) is required as a cofactor. Testis specific.

It is found in the cytoplasm. It localises to the nucleus. It catalyses the reaction RNA(n) + ATP = RNA(n)-3'-adenine ribonucleotide + diphosphate. The protein is Poly(A) polymerase beta of Mus musculus (Mouse).